The sequence spans 2121 residues: Non-reducing polyketide synthase aoiG (2121 aa).

The Starter acyltransferase (SAT) domain occupies 5–258 (YIFGDQTVRV…LPVSIYAPYH (254 aa)). The Ketosynthase family 3 (KS3) domain maps to 386 to 817 (SSKIAIIGFS…GGNTAVLVED (432 aa)). Catalysis depends on for beta-ketoacyl synthase activity residues C558, H693, and H735. A Malonyl-CoA:ACP transacylase (MAT) domain is found at 921-1239 (FLFTGQGAQQ…LSVLHLAGVR (319 aa)). The N-terminal hotdog fold stretch occupies residues 1302-1433 (QKILEEEMTA…CTIELQRPHQ (132 aa)). Positions 1302-1608 (QKILEEEMTA…FQKVARRVLE (307 aa)) constitute a PKS/mFAS DH domain. H1334 serves as the catalytic Proton acceptor; for dehydratase activity. The tract at residues 1461 to 1608 (THKMRRGVAY…FQKVARRVLE (148 aa)) is C-terminal hotdog fold. The Proton donor; for dehydratase activity role is filled by D1519. Positions 1646–1723 (PHVEDAWQQV…SLRIYLNMSS (78 aa)) constitute a Carrier 1 domain. O-(pantetheine 4'-phosphoryl)serine is present on S1683. Low complexity predominate over residues 1728–1752 (DSIETSSYPTPDESTTTTITSPSGS). The interval 1728–1760 (DSIETSSYPTPDESTTTTITSPSGSDRNVGRNS) is disordered. One can recognise a Carrier 2 domain in the interval 1763–1840 (DGVGTTVGLV…AITAALHAIF (78 aa)). The residue at position 1800 (S1800) is an O-(pantetheine 4'-phosphoryl)serine. The TE/CLC (thioesterase/Claisen cyclase) domain stretch occupies residues 1872–1976 (TLFLFPDGSG…ILIDSPNPMG (105 aa)).

Requires pantetheine 4'-phosphate as cofactor.

Functionally, non-reducing polyketide synthase; part of the gene cluster that mediates the biosynthesis of a methylated derivative of known natural products orthosporin and diaporthin. AoiG catalyzes the biosynthesis of the hexaketide isocoumarin scaffold, via condensation of one acetyl-CoA starter unit with 6 malonyl-CoA units. An oxidoreductase that has still to be identified catalyzes the stereospecific reduction of the carbonyl moiety of the hexaketide isocoumarin scaffold to generate the S-configured secondary alcohol at C-11 of orthosporin. The methyltrasferase aoiF then catalyzes the biotransformation of not only orthosporin to diaporthin but also diaporthin to the final product, by performing a tandem methylation of the polyketide core. This chain is Non-reducing polyketide synthase aoiG, found in Aspergillus oryzae (strain ATCC 42149 / RIB 40) (Yellow koji mold).